The following is a 565-amino-acid chain: uncharacterized protein (565 aa).

5 helical membrane-spanning segments follow: residues 14-34, 36-56, 92-112, 117-137, and 157-177; these read LAIFLTLFVGFWIGKIKIGKF, LGVVTSVLLVGVLVGQLDITV, MGFAAIMCVFCLIIPWILAKI, VGEAAGLLAGSQTISAVIGVA, and IIPVSYAVTYIFGTAGSAWVL. The RCK C-terminal domain occupies 296–381; the sequence is PEVLDPQLLD…VDAAAKQLGY (86 aa). 6 helical membrane passes run 391-411, 414-434, 448-468, 481-501, 508-530, and 545-565; these read MIFVGLGILIGGLIGALSIHM, VPISLSTSGGALIGGLFFGWL, ALWILDNVGLNMFIAVVGIAA, LSLFIVGALATSIPLIAGILM, FHPALVLGCTAGARTTTAALGAI, and VTYAVGNTLLIIWGVVIVLLM.

The protein belongs to the AAE transporter (TC 2.A.81) family.

It is found in the cell membrane. This is an uncharacterized protein from Bacteroides fragilis (strain YCH46).